A 128-amino-acid chain; its full sequence is Ribonuclease pancreatic (128 aa).

The span at 1–15 shows a compositional bias: basic and acidic residues; the sequence is SESSAKKFERQHMDS. Positions 1-28 are disordered; that stretch reads SESSAKKFERQHMDSRGSPSTNPNYCNE. Residues Lys7 and Arg10 each contribute to the substrate site. Residue His12 is the Proton acceptor of the active site. Cystine bridges form between Cys26–Cys84, Cys40–Cys95, Cys58–Cys110, and Cys65–Cys72. A glycan (N-linked (GlcNAc...) asparagine) is linked at Asn34. Substrate is bound by residues 41–45, Lys66, and Arg85; that span reads KPVNT. His119 (proton donor) is an active-site residue.

This sequence belongs to the pancreatic ribonuclease family. In terms of assembly, monomer. Interacts with and forms tight 1:1 complexes with RNH1. Dimerization of two such complexes may occur. Interaction with RNH1 inhibits this protein. Pancreas.

Its subcellular location is the secreted. It catalyses the reaction an [RNA] containing cytidine + H2O = an [RNA]-3'-cytidine-3'-phosphate + a 5'-hydroxy-ribonucleotide-3'-[RNA].. The enzyme catalyses an [RNA] containing uridine + H2O = an [RNA]-3'-uridine-3'-phosphate + a 5'-hydroxy-ribonucleotide-3'-[RNA].. Its function is as follows. Endonuclease that catalyzes the cleavage of RNA on the 3' side of pyrimidine nucleotides. Acts on single-stranded and double-stranded RNA. The polypeptide is Ribonuclease pancreatic (RNASE1) (Myocastor coypus (Coypu)).